Reading from the N-terminus, the 547-residue chain is Probable aquaporin-5 (547 aa).

Residues 1–13 (MSSSILNNRSARS) show a composition bias toward polar residues. The tract at residues 1–208 (MSSSILNNRS…DPRIPPNDRR (208 aa)) is disordered. At 1–269 (MSSSILNNRS…QWMNSNFKNH (269 aa)) the chain is on the cytoplasmic side. Residues 15 to 32 (PAGANPAFNPPAEASSSS) are compositionally biased toward low complexity. 2 stretches are compositionally biased toward basic and acidic residues: residues 152–169 (EYERYYRNEGRNDRDRYT) and 198–208 (DDPRIPPNDRR). The chain crosses the membrane as a helical span at residues 270 to 290 (FVAGVGEFIGTTMFLFFAFAG). Residues 291 to 316 (TEVANIQADTTNRTTTGESTGSLNVS) are Extracellular-facing. N-linked (GlcNAc...) asparagine glycans are attached at residues N302 and N314. The helical transmembrane segment at 317–337 (KLLYISIIFGFSLMVNVWVFF) threads the bilayer. The Cytoplasmic portion of the chain corresponds to 338-363 (RISGGLFNPAVTMAMLMVKAISVTRA). The NPA 1 signature appears at 345–347 (NPA). A helical transmembrane segment spans residues 364–384 (IVLFLAQILGSMLASVVVRYL). The Extracellular portion of the chain corresponds to 385–400 (FPETFNVRTTLGGGAS). A helical membrane pass occupies residues 401–421 (LVQGVFIEALLTAELVFTIFM). The Cytoplasmic portion of the chain corresponds to 422-428 (LAKEKHR). The chain crosses the membrane as a helical span at residues 429-449 (ATFIAPVGIGLALFIAEMVGV). The Extracellular portion of the chain corresponds to 450-475 (QFTGGSLNPARSFGPCVITGSFDTEH). Positions 457–459 (NPA) match the NPA 2 motif. A helical transmembrane segment spans residues 476 to 496 (WIYWVGPAIGSLIAVCFYWFI). Topologically, residues 497–547 (KTLEYEMANPGADGDDLNDPTKNPEKRAEIQASKPVPTAAFGSGKTASILS) are cytoplasmic. The segment at 510-547 (GDDLNDPTKNPEKRAEIQASKPVPTAAFGSGKTASILS) is disordered.

Belongs to the MIP/aquaporin (TC 1.A.8) family.

The protein resides in the membrane. It carries out the reaction H2O(in) = H2O(out). Its function is as follows. Probable water channel that may have redundant functions with FgAQP3. In Gibberella zeae (strain ATCC MYA-4620 / CBS 123657 / FGSC 9075 / NRRL 31084 / PH-1) (Wheat head blight fungus), this protein is Probable aquaporin-5.